We begin with the raw amino-acid sequence, 353 residues long: Photosystem II protein D1 (353 aa).

At T2 the chain carries N-acetylthreonine. Position 2 is a phosphothreonine (T2). 3 consecutive transmembrane segments (helical) span residues 29-46 (YIGWFGVLMIPTLLTATS), 118-133 (HFLLGVACYMGREWEL), and 142-156 (WIAVAYSAPVAAATA). H118 is a chlorophyll a binding site. Y126 contacts pheophytin a. D170 and E189 together coordinate [CaMn4O5] cluster. Residues 197 to 218 (FHMLGVAGVFGGSLFSAMHGSL) form a helical membrane-spanning segment. Residue H198 coordinates chlorophyll a. Residues H215 and 264-265 (SF) contribute to the a quinone site. Fe cation is bound at residue H215. H272 contacts Fe cation. A helical transmembrane segment spans residues 274-288 (FLAAWPVIGIWFTAL). Residues H332, E333, D342, and A344 each coordinate [CaMn4O5] cluster. The propeptide occupies 345 to 353 (AIEAPSTNG).

It belongs to the reaction center PufL/M/PsbA/D family. In terms of assembly, PSII is composed of 1 copy each of membrane proteins PsbA, PsbB, PsbC, PsbD, PsbE, PsbF, PsbH, PsbI, PsbJ, PsbK, PsbL, PsbM, PsbT, PsbX, PsbY, PsbZ, Psb30/Ycf12, at least 3 peripheral proteins of the oxygen-evolving complex and a large number of cofactors. It forms dimeric complexes. The D1/D2 heterodimer binds P680, chlorophylls that are the primary electron donor of PSII, and subsequent electron acceptors. It shares a non-heme iron and each subunit binds pheophytin, quinone, additional chlorophylls, carotenoids and lipids. D1 provides most of the ligands for the Mn4-Ca-O5 cluster of the oxygen-evolving complex (OEC). There is also a Cl(-1) ion associated with D1 and D2, which is required for oxygen evolution. The PSII complex binds additional chlorophylls, carotenoids and specific lipids. is required as a cofactor. In terms of processing, tyr-161 forms a radical intermediate that is referred to as redox-active TyrZ, YZ or Y-Z. Post-translationally, C-terminally processed by CTPA; processing is essential to allow assembly of the oxygen-evolving complex and thus photosynthetic growth.

The protein resides in the plastid. The protein localises to the chloroplast thylakoid membrane. The catalysed reaction is 2 a plastoquinone + 4 hnu + 2 H2O = 2 a plastoquinol + O2. Its function is as follows. Photosystem II (PSII) is a light-driven water:plastoquinone oxidoreductase that uses light energy to abstract electrons from H(2)O, generating O(2) and a proton gradient subsequently used for ATP formation. It consists of a core antenna complex that captures photons, and an electron transfer chain that converts photonic excitation into a charge separation. The D1/D2 (PsbA/PsbD) reaction center heterodimer binds P680, the primary electron donor of PSII as well as several subsequent electron acceptors. The polypeptide is Photosystem II protein D1 (Amaranthus hybridus (Slim amaranth)).